The following is a 517-amino-acid chain: NADH-quinone oxidoreductase subunit N (517 aa).

A run of 14 helical transmembrane segments spans residues 14 to 34 (LAPT…EAFV), 40 to 60 (HMVQ…MVVV), 77 to 97 (GPAL…LLLI), 131 to 151 (ATEV…FVAA), 154 to 174 (LLTM…LCAL), 189 to 209 (YFLL…LVYG), 238 to 258 (VLLF…AAAA), 272 to 292 (PTPI…GALL), 306 to 326 (FTPI…VLAV), 334 to 354 (LLAY…LAPS), 362 to 382 (MFYL…VTLV), 404 to 424 (FYAG…LTSG), 451 to 471 (SMVL…SEPG), and 481 to 501 (GWLT…LGVV).

The protein belongs to the complex I subunit 2 family. As to quaternary structure, NDH-1 is composed of 14 different subunits. Subunits NuoA, H, J, K, L, M, N constitute the membrane sector of the complex.

The protein resides in the cell membrane. The catalysed reaction is a quinone + NADH + 5 H(+)(in) = a quinol + NAD(+) + 4 H(+)(out). Functionally, NDH-1 shuttles electrons from NADH, via FMN and iron-sulfur (Fe-S) centers, to quinones in the respiratory chain. The immediate electron acceptor for the enzyme in this species is believed to be a menaquinone. Couples the redox reaction to proton translocation (for every two electrons transferred, four hydrogen ions are translocated across the cytoplasmic membrane), and thus conserves the redox energy in a proton gradient. This is NADH-quinone oxidoreductase subunit N from Salinispora arenicola (strain CNS-205).